The following is a 432-amino-acid chain: Pachytene checkpoint protein 2 homolog (432 aa).

The residue at position 1 (methionine 1) is an N-acetylmethionine. 179–186 is a binding site for ATP; sequence GPPGTGKT.

Belongs to the AAA ATPase family. PCH2 subfamily. As to quaternary structure, specifically interacts with the ligand binding domain of the thyroid receptor (TR). This interaction does not require the presence of thyroid hormone for its interaction. Interacts with proteasome subunit PSMA8; to participate in meiosis progression during spermatogenesis.

In terms of biological role, plays a key role in chromosome recombination and chromosome structure development during meiosis. Required at early steps in meiotic recombination that leads to non-crossovers pathways. Also needed for efficient completion of homologous synapsis by influencing crossover distribution along the chromosomes affecting both crossovers and non-crossovers pathways. Also required for development of higher-order chromosome structures and is needed for synaptonemal-complex formation. In males, required for efficient synapsis of the sex chromosomes and for sex body formation. Promotes early steps of the DNA double-strand breaks (DSBs) repair process upstream of the assembly of RAD51 complexes. Required for depletion of HORMAD1 and HORMAD2 from synapsed chromosomes. Plays a role in mitotic spindle assembly checkpoint (SAC) activation. The polypeptide is Pachytene checkpoint protein 2 homolog (Trip13) (Rattus norvegicus (Rat)).